The primary structure comprises 356 residues: Zinc finger CCCH domain-containing protein 49 (356 aa).

C3H1-type zinc fingers lie at residues 120–146 (YSGT…HGVF) and 155–177 (YRTQ…AHSP). Positions 209–235 (ISPVSGSPPMSPRADSESSPMTQSLSR) are disordered. The span at 225–235 (ESSPMTQSLSR) shows a compositional bias: polar residues.

The sequence is that of Zinc finger CCCH domain-containing protein 49 from Arabidopsis thaliana (Mouse-ear cress).